A 495-amino-acid polypeptide reads, in one-letter code: WD repeat-containing protein 37 (495 aa).

Residues 1-34 (MPTESGSWAAARQTKQKRKSHSLSIKRTNSSEQD) form a disordered region. Residues 22-31 (SLSIKRTNSS) show a composition bias toward polar residues. 2 WD repeats span residues 154–194 (GHRD…CLIK) and 197–236 (GHAG…PTPQ). The disordered stretch occupies residues 237 to 268 (PMADTSQISGEEEVDFSDKDENDGDGDASSDC). Over residues 246-264 (GEEEVDFSDKDENDGDGDA) the composition is skewed to acidic residues. WD repeat units follow at residues 280–319 (SHQG…LVHS), 322–361 (GHDQ…IHSV), 366–404 (GHTD…SPIA), 407–446 (RTDS…LARL), and 453–494 (GHRR…LLQE).

It localises to the cytoplasm. It is found in the nucleus. The sequence is that of WD repeat-containing protein 37 (wdr37) from Xenopus laevis (African clawed frog).